A 210-amino-acid polypeptide reads, in one-letter code: Ribosomal RNA small subunit methyltransferase G (210 aa).

S-adenosyl-L-methionine is bound by residues Gly-74, Phe-79, 127–128 (IE), and Arg-143.

This sequence belongs to the methyltransferase superfamily. RNA methyltransferase RsmG family.

Its subcellular location is the cytoplasm. The catalysed reaction is guanosine(527) in 16S rRNA + S-adenosyl-L-methionine = N(7)-methylguanosine(527) in 16S rRNA + S-adenosyl-L-homocysteine. In terms of biological role, specifically methylates the N7 position of guanine in position 527 of 16S rRNA. The sequence is that of Ribosomal RNA small subunit methyltransferase G from Chelativorans sp. (strain BNC1).